Reading from the N-terminus, the 180-residue chain is uncharacterized protein (180 aa).

Belongs to the CdaR family.

This is an uncharacterized protein from Thermomonospora curvata.